The chain runs to 653 residues: Exocyst complex component EXO70C1 (653 aa).

3 stretches are compositionally biased toward basic and acidic residues: residues 1-34 (MEKSGNHHHANESSENHDHKSEDHENKQHSDELH), 159-177 (SREEEKKNNNNNNHHDGSN), and 438-451 (NKPEPETKPRQQQR). 3 disordered regions span residues 1–50 (MEKS…HSLV), 159–190 (SREEEKKNNNNNNHHDGSNSDHNNSSTNDSDR), and 432–456 (EANQTDNKPEPETKPRQQQREDDEE).

The protein belongs to the EXO70 family. In terms of assembly, interacts with ROH1A. Binds directly to B1L. In terms of processing, phosphorylated. In terms of tissue distribution, expressed in anthers, pollen and root trichoblast cells.

The protein localises to the cytoplasm. Its function is as follows. Required for global plant growth and for male transmission. Involved in the regulation of tip growth of pollen tube. The protein is Exocyst complex component EXO70C1 of Arabidopsis thaliana (Mouse-ear cress).